A 315-amino-acid chain; its full sequence is B3 domain-containing protein At1g05920 (315 aa).

The disordered stretch occupies residues 24-129 (MISRDNQKKT…PQVASVPKSV (106 aa)). Composition is skewed to basic and acidic residues over residues 39-51 (VREE…EEMI), 66-83 (KEGK…DNRT), and 100-114 (FDHV…HAYL). Positions 204-306 (INTVIQNDFL…ILCFALVPPT (103 aa)) form a DNA-binding region, TF-B3.

It localises to the nucleus. The protein is B3 domain-containing protein At1g05920 of Arabidopsis thaliana (Mouse-ear cress).